A 328-amino-acid polypeptide reads, in one-letter code: Sphingolipid delta(4)-desaturase DES1-like (328 aa).

3 helical membrane-spanning segments follow: residues 50–70 (PLAF…ATLL), 78–98 (ILTV…LAIH), and 114–134 (WLGI…FQKY). The Histidine box-1 signature appears at 98–102 (HELSH). The short motif at 135–139 (HLEHH) is the Histidine box-2 element. The next 3 membrane-spanning stretches (helical) occupy residues 164–184 (LSKS…PLFL), 192–212 (WEFT…YFFG), and 217–237 (AYLI…GHFI). Positions 266–270 (HNEHH) match the Histidine box-3 motif.

This sequence belongs to the fatty acid desaturase type 1 family. DEGS subfamily.

The protein localises to the endoplasmic reticulum membrane. It catalyses the reaction an N-acylsphinganine + 2 Fe(II)-[cytochrome b5] + O2 + 2 H(+) = an N-acylsphing-4-enine + 2 Fe(III)-[cytochrome b5] + 2 H2O. Functionally, sphingolipid-delta-4-desaturase required for the biosynthesis of delta-4-unsaturated sphingolipids and derivatives. The sequence is that of Sphingolipid delta(4)-desaturase DES1-like from Oryza sativa subsp. japonica (Rice).